The following is a 617-amino-acid chain: V-type proton ATPase catalytic subunit A (617 aa).

At Thr-136 the chain carries Phosphothreonine. Position 250–257 (250–257 (GAFGCGKT)) interacts with ATP. Residue Ser-384 is modified to Phosphoserine; by AMPK.

This sequence belongs to the ATPase alpha/beta chains family. V-ATPase is a heteromultimeric enzyme made up of two complexes: the ATP-hydrolytic V1 complex and the proton translocation V0 complex. The V1 complex consists of three catalytic AB heterodimers that form a heterohexamer, three peripheral stalks each consisting of EG heterodimers, one central rotor including subunits D and F, and the regulatory subunits C and H. The proton translocation complex V0 consists of the proton transport subunit a, a ring of proteolipid subunits c9c'', rotary subunit d, subunits e and f, and the accessory subunits ATP6AP1/Ac45 and ATP6AP2/PRR. Interacts with the V0 complex V-ATPase subunit a4 ATP6V0A4. Interacts with WFS1. Interacts with alpha-crystallin B chain/CRYAB and with MTOR, forming a ternary complex. Phosphorylation at Ser-384 by AMPK down-regulates its enzyme activity.

Its subcellular location is the cytoplasm. The protein localises to the cytosol. It localises to the cytoplasmic vesicle. It is found in the secretory vesicle. The protein resides in the clathrin-coated vesicle membrane. Its subcellular location is the lysosome. It catalyses the reaction ATP + H2O + 4 H(+)(in) = ADP + phosphate + 5 H(+)(out). With respect to regulation, ATP hydrolysis occurs at the interface between the nucleotide-binding domains of subunits A and B. ATP hydrolysis triggers a conformational change in the subunits D and F, which induces a shift of subunit d. The c-ring is subsequently rotated and results in a continuous proton translocation across the membrane. Functionally, catalytic subunit of the V1 complex of vacuolar(H+)-ATPase (V-ATPase), a multisubunit enzyme composed of a peripheral complex (V1) that hydrolyzes ATP and a membrane integral complex (V0) that translocates protons. V-ATPase is responsible for acidifying and maintaining the pH of intracellular compartments and in some cell types, is targeted to the plasma membrane, where it is responsible for acidifying the extracellular environment. In aerobic conditions, involved in intracellular iron homeostasis, thus triggering the activity of Fe(2+) prolyl hydroxylase (PHD) enzymes, and leading to HIF1A hydroxylation and subsequent proteasomal degradation. May play a role in neurite development and synaptic connectivity. The protein is V-type proton ATPase catalytic subunit A (ATP6V1A) of Pongo abelii (Sumatran orangutan).